A 754-amino-acid polypeptide reads, in one-letter code: MIETIQADWIKSEAINLENCCNDNPLKILGPHFYEEQWVIRVWVPEADEVKVNFKDKTYKAESINHKWLFEAILPENPNSNYEINISRGGITHTQHDPWSYREEWMGEVDRHLFAEGNHHHIWEKMGAHLIEDKNQKGVMFCIWAPNAKSISIIGDINSWDGRHNPMQKRLGGIWELFMPMMKEGDKYKYEIRTQQGHIYEKADPYGFLHEVRPQNGSIVSKLKNFNWSDSSWISNRDSSSQINKPISVYEMHLGSWLHESTDNKYLDDNGEPRDPVPAADLKPGTRLLTYPELTKKLIPYVKERGFTHIELMPISEHPFDGSWGYQVTGWYAPTSRFGTPNEFREFVNKCHEEGIGVILDWVPGHFPKDKHGLAFFDGCHLYEHGDSRIGEHKEWGTLIFNYSRNEVRNFLVANLVYWFEEFHIDGIRVDAVASMLYRDYLRPDGEWIPNENGGNENIEAVKFLQQANHVLFQHFPGALSIAEESTTWPMVTKPTDMGGLGFNLKWNMGWMHDMLDYFEIDPWFRQFHQNSVTFSITYNYTENFMLALSHDEVVHGKSHLLHKMPGDDWKKYANTRALLTYMWTHPGKKTIFMGMEFGQRQEWNVWDDLQWELLEFEPHRGIRNLIDDLNKLYKNEPALWKNDFDPYGFQWIDCNDKSNSVISFMRRESDTNEWLVIVANFTPNTHGSYKIGVPVEGFYKEIFNSDGSRYGGSNKGNMGGKDTINYNIHDYQNALELALPPLSVSIFKHQSEK.

Asp-431 functions as the Nucleophile in the catalytic mechanism. Catalysis depends on Glu-484, which acts as the Proton donor.

Belongs to the glycosyl hydrolase 13 family. GlgB subfamily. As to quaternary structure, monomer.

The enzyme catalyses Transfers a segment of a (1-&gt;4)-alpha-D-glucan chain to a primary hydroxy group in a similar glucan chain.. It participates in glycan biosynthesis; glycogen biosynthesis. Its function is as follows. Catalyzes the formation of the alpha-1,6-glucosidic linkages in glycogen by scission of a 1,4-alpha-linked oligosaccharide from growing alpha-1,4-glucan chains and the subsequent attachment of the oligosaccharide to the alpha-1,6 position. This Prochlorococcus marinus (strain MIT 9301) protein is 1,4-alpha-glucan branching enzyme GlgB.